Consider the following 340-residue polypeptide: 4-dimethylallyltryptophan N-methyltransferase ifgB (340 aa).

The protein belongs to the methyltransferase superfamily. As to quaternary structure, homodimer.

It catalyses the reaction 4-(3-methylbut-2-enyl)-L-tryptophan + S-adenosyl-L-methionine = 4-(3-methylbut-2-enyl)-L-abrine + S-adenosyl-L-homocysteine + H(+). The protein operates within alkaloid biosynthesis; ergot alkaloid biosynthesis. In terms of biological role, 4-dimethylallyltryptophan N-methyltransferase; part of the gene cluster that mediates the biosynthesis of isofumigaclavines, fungal ergot alkaloids. The tryptophan dimethylallyltransferase ifgA catalyzes the first step of ergot alkaloid biosynthesis by condensing dimethylallyl diphosphate (DMAP) and tryptophan to form 4-dimethylallyl-L-tryptophan. The second step is catalyzed by the methyltransferase ifgB that methylates 4-dimethylallyl-L-tryptophan in the presence of S-adenosyl-L-methionine, resulting in the formation of N-methyl-dimethylallyl-L-tryptophan. The catalase ifgD and the FAD-dependent oxidoreductase ifgC then transform N-methyl-dimethylallyl-L-tryptophan to chanoclavine-I which is further oxidized by ifgE in the presence of NAD(+), resulting in the formation of chanoclavine-I aldehyde. The chanoclavine-I aldehyde reductases ifgG and/or fgaOx3 reduce chanoclavine-I aldehyde to dihydrochanoclavine-I aldehyde that spontaneously dehydrates to form 6,8-dimethyl-6,7-didehydroergoline. The festuclavine dehydrogenases ifgF1 and/or ifgF2 then catalyze the reduction of 6,8-dimethyl-6,7-didehydroergoline to form festuclavine. Hydrolysis of festuclavine by a yet undetermined cytochrome P450 monooxygenase (called ifgH) then leads to the formation of isofumigaclavine B which is in turn acetylated by ifgI to isofumigaclavine A. Penicillium roqueforti has interestingly at least two sets of genes for the consumption of chanoclavine-I aldehyde on three different loci, the OYEs ifgG/fgaOx3 and the festuclavine synthase homologs ifgF1/ifgF2. The reason for the duplication of these genes is unclear, probably to ensure the conversion of chanoclavine-I aldehyde by differential gene expression under various environmental conditions. This Penicillium roqueforti (strain FM164) protein is 4-dimethylallyltryptophan N-methyltransferase ifgB.